The primary structure comprises 149 residues: Ribosomal RNA large subunit methyltransferase H (149 aa).

S-adenosyl-L-methionine-binding positions include Leu71, Gly98, and 117-122 (LSKLTL).

It belongs to the RNA methyltransferase RlmH family. In terms of assembly, homodimer.

It localises to the cytoplasm. The enzyme catalyses pseudouridine(1915) in 23S rRNA + S-adenosyl-L-methionine = N(3)-methylpseudouridine(1915) in 23S rRNA + S-adenosyl-L-homocysteine + H(+). Specifically methylates the pseudouridine at position 1915 (m3Psi1915) in 23S rRNA. This is Ribosomal RNA large subunit methyltransferase H from Campylobacter jejuni subsp. doylei (strain ATCC BAA-1458 / RM4099 / 269.97).